Here is a 343-residue protein sequence, read N- to C-terminus: Phosphate acyltransferase (343 aa).

This sequence belongs to the PlsX family. Homodimer. Probably interacts with PlsY.

The protein resides in the cytoplasm. It carries out the reaction a fatty acyl-[ACP] + phosphate = an acyl phosphate + holo-[ACP]. It participates in lipid metabolism; phospholipid metabolism. Functionally, catalyzes the reversible formation of acyl-phosphate (acyl-PO(4)) from acyl-[acyl-carrier-protein] (acyl-ACP). This enzyme utilizes acyl-ACP as fatty acyl donor, but not acyl-CoA. The sequence is that of Phosphate acyltransferase from Coxiella burnetii (strain Dugway 5J108-111).